The chain runs to 231 residues: Phycobilisome rod-core linker polypeptide cpcG (231 aa).

The PBS-linker domain maps to Ser11–Lys191.

Belongs to the phycobilisome linker protein family. As to quaternary structure, the phycobilisome is a hemidiscoidal structure that is composed of two distinct substructures: a core complex and a number of rods radiating from the core.

The protein localises to the plastid. Its subcellular location is the chloroplast. It localises to the chloroplast thylakoid membrane. Functionally, rod-core linker protein required for attachment of phycocyanin to allophycocyanin in cores of phycobilisomes. Its function is as follows. Linker polypeptides determine the state of aggregation and the location of the disk-shaped phycobiliprotein units within the phycobilisome and modulate their spectroscopic properties in order to mediate a directed and optimal energy transfer. This is Phycobilisome rod-core linker polypeptide cpcG (cpcG) from Porphyra purpurea (Red seaweed).